The following is a 750-amino-acid chain: Putative tyrosine-protein kinase EpsB (750 aa).

Residues 1-31 (MTQNLPQPPAVNAPENELDLVRYLDVLVANR) lie on the Cytoplasmic side of the membrane. The helical transmembrane segment at 32–52 (WLIAGIAAAVMLLGAAYAFLA) threads the bilayer. Topologically, residues 53–444 (RPVYEADIMV…VPEEPVKPKK (392 aa)) are periplasmic. A helical membrane pass occupies residues 445 to 465 (LTVTPLAGVLGVVLGVMAAFV). Residues 466–750 (RNALFGGITD…NSKPPEAESA (285 aa)) lie on the Cytoplasmic side of the membrane.

Belongs to the etk/wzc family.

Its subcellular location is the cell inner membrane. The enzyme catalyses L-tyrosyl-[protein] + ATP = O-phospho-L-tyrosyl-[protein] + ADP + H(+). Probably involved in polymerization and/or export of exopolysaccharide EPS I which functions as a virulence factor. May be involved in an ATP-dependent process in the pathway for EPS I production, possibly export of the trimeric repeat units across the inner membrane or their polymerization. This chain is Putative tyrosine-protein kinase EpsB (epsB), found in Ralstonia solanacearum (Pseudomonas solanacearum).